Consider the following 582-residue polypeptide: BTB/POZ domain and ankyrin repeat-containing protein NPR1 (582 aa).

Residues 1–12 are compositionally biased toward polar residues; the sequence is MEPPTSHVTNAF. Positions 1-27 are disordered; it reads MEPPTSHVTNAFSDSDSASVEEGDADA. The BTB domain maps to 55 to 140; that stretch reads ADARIAVPGG…VLDYLYSGRV (86 aa). A C2HC NPR-type zinc finger spans residues 147–161; the sequence is ACLCVDEDCAHVGCH. Zn(2+) is bound by residues Cys-150, Cys-155, His-157, and Cys-160. ANK repeat units follow at residues 229–258, 269–299, 301–328, and 332–361; these read RSNL…SLGL, KHVR…NLDD, FALH…DVNH, and RGYT…RPAD. Positions 391–526 are salicylic acid-binding core (SBC); the sequence is PSPKDRLCIE…VLDKIMDDET (136 aa). Arg-436 contributes to the salicylate binding site. Disordered stretches follow at residues 525–544 and 551–582; these read ETDP…KRFH and QKAF…RPRR. Basic and acidic residues predominate over residues 553–563; sequence AFHEDKEENDR. Residues 564–574 are compositionally biased toward low complexity; that stretch reads SGLSSSSSSTS.

The protein belongs to the plant 'ANKYRIN-BTB/POZ' family. 'NPR1-like' subfamily. Oligomer in an uninduced state; disulfide-linked. Forms activated monomer upon changes in cellular redox potential. Interacts with TGA2.2. Interacts with NRR.

It is found in the cytoplasm. The protein resides in the nucleus. The protein localises to the nuclear body. It functions in the pathway protein modification; protein ubiquitination. Functionally, salicylic acid (SA)-binding substrate-specific adapter of an E3 ubiquitin-protein ligase complex (CUL3-RBX1-BTB) which mediates the ubiquitination and subsequent proteasomal degradation of target proteins. Transcription cofactor that represses gene expression in the absence of salicylic acid (SA), when attached to negative cis-elements (W-box) with WRKY transcription factors, but stimulates gene expression upon activation by SA, when sumoylated and attached to positive cis-elements (as-1) with TGA transcription factors, thus confering immunity through a series of gene regulations ending in a significant increase in antimicrobial and defense genes expression. Key positive factor of disease resistance. Involved in defense response against the bacterial blight disease caused by Xanthomonas oryzae pv. oryzae (Xoo). Plants over-expressing NPR1/NH1 acquire high levels of resistance to Xoo, express constitutively defense genes and develop lesion-mimic spots on leaves at pre-flowering stage. Involved in basal resistance to the blast pathogen Magnaporthe oryzae. Plants over-expressing NPR1/NH1 have increased resistance to M.oryzae infection. Plays an essential role in benzothiadiazole (BTH)-induced resistance to the blast fungus disease caused by Magnaporthe oryzae. Functions as a transcriptional coactivator of TGA2.1 and LG2 in vitro. Involved in defense response against herbivore. Plants silencing NPR1/NH1 have increased herbivore-induced trypsin proteinase inhibitors and volatiles, which reduces the performance of the striped stem borer (SSB) Chilo suppressalis. This chain is BTB/POZ domain and ankyrin repeat-containing protein NPR1, found in Oryza sativa subsp. indica (Rice).